Here is a 192-residue protein sequence, read N- to C-terminus: Xanthine phosphoribosyltransferase (192 aa).

Residues Leu-20 and Asn-27 each coordinate xanthine. Ala-128–Ala-132 provides a ligand contact to 5-phospho-alpha-D-ribose 1-diphosphate. Lys-156 contacts xanthine.

The protein belongs to the purine/pyrimidine phosphoribosyltransferase family. Xpt subfamily. As to quaternary structure, homodimer.

Its subcellular location is the cytoplasm. It catalyses the reaction XMP + diphosphate = xanthine + 5-phospho-alpha-D-ribose 1-diphosphate. It participates in purine metabolism; XMP biosynthesis via salvage pathway; XMP from xanthine: step 1/1. Functionally, converts the preformed base xanthine, a product of nucleic acid breakdown, to xanthosine 5'-monophosphate (XMP), so it can be reused for RNA or DNA synthesis. In Staphylococcus epidermidis (strain ATCC 35984 / DSM 28319 / BCRC 17069 / CCUG 31568 / BM 3577 / RP62A), this protein is Xanthine phosphoribosyltransferase.